The chain runs to 278 residues: MKESYYSIGEVSKLANVSIKALRYYDKIDLFKPAYVDPDTSYRYYTDSQLIHLDLIKSLKYIGTPLEEMKKAQDLEMEELFAFYTEQERQIREKLDFLSALEQTISLVKKRMKRQMEYPALGEVFVLDEEEIRIIQTEAEGIGPENVLNASYSKLKKFIESADGFTNNSYGATFSFQPYTSIDEMTYRHIFTPVLTNKQISSITPDMEITTIPKGRYACIAYNFSPEHYFLNLQKLIKYIADRQLTVVSDVYELIIPIHYSPKKQEEYRVEMKIRIAE.

The HTH merR-type domain maps to Y5–L75. Positions I8–K27 form a DNA-binding region, H-T-H motif.

As to quaternary structure, binds DNA as a homodimer.

Its function is as follows. Activates transcription of the bmr gene in response to structurally dissimilar drugs. Binds rhodamine as an inducer. This Bacillus subtilis (strain 168) protein is Multidrug-efflux transporter 1 regulator (bmrR).